Reading from the N-terminus, the 555-residue chain is Natural resistance-associated macrophage protein 1 (555 aa).

Residues 1–63 (MSGSGPAMAS…STPGFSFRKL (63 aa)) lie on the Cytoplasmic side of the membrane. Residues 64-81 (WAFTGPGFLMSIAYLDPG) traverse the membrane as a helical segment. Residues 82-90 (NVESDLQCG) are Extracellular-facing. Residues 91–110 (AVAGFKLLWVLLWATVLGLL) traverse the membrane as a helical segment. Residues 111 to 147 (CQRLAIRLGVVTGKDLAEICYLYYPRVPRVLLWLMME) lie on the Cytoplasmic side of the membrane. Residues 148–168 (IAIIGSDMQEVIGTAIAFSLL) form a helical membrane-spanning segment. At 169–172 (SAGR) the chain is on the extracellular side. A helical membrane pass occupies residues 173-192 (IPLWGGVLITITDTLFFLFL). Over 193 to 201 (DKYGLRKLE) the chain is Cytoplasmic. The chain crosses the membrane as a helical span at residues 202–222 (AFFGFLITIMALTFGYEYVMV). The Extracellular portion of the chain corresponds to 223–245 (RPAQTEVLKGIFLPYCPGCGREE). The chain crosses the membrane as a helical span at residues 246–264 (LLQAVGIVGAIIMPHNIFL). Residues 265 to 292 (HSSLVKTRAIDRSKKEEVKEANMYFLTE) lie on the Cytoplasmic side of the membrane. Residues 293–312 (SCLALFVSFLINLFVMAVFG) traverse the membrane as a helical segment. Topologically, residues 313 to 354 (EAFYHQRNEDVHNKCVNSSVSRYASIFPINNETVSVDIYQGG) are extracellular. N329 and N343 each carry an N-linked (GlcNAc...) asparagine glycan. The helical transmembrane segment at 355 to 374 (VILGCYFGAAALYIWAVGIL) threads the bilayer. Residues 375–405 (AAGQSSTMTGTYAGQFVMEGFLQLRWSRFTR) are Cytoplasmic-facing. A helical membrane pass occupies residues 406-423 (VLFTRSLAILPTLFVAAF). Topologically, residues 424 to 434 (RDVSQLTGMND) are extracellular. The chain crosses the membrane as a helical span at residues 435–455 (LLNVLQSILLPFAVLPVLTFT). Topologically, residues 456-471 (SLRPLMHDFANGLLGQ) are cytoplasmic. The helical transmembrane segment at 472–493 (VLMSLITGLVCAINVYFVVDFL) threads the bilayer. The Extracellular segment spans residues 494 to 501 (PTLRGLGY). The helical transmembrane segment at 502 to 521 (LIPLGLLLVAYVAFVTYLLW) threads the bilayer. The Cytoplasmic segment spans residues 522-555 (TCSIAHGARFLARGRYNRFSFDVTADVPGLAGPH).

It belongs to the NRAMP family. Macrophages; spleen and thymus and at lower level in liver and lung.

Its subcellular location is the late endosome membrane. The protein resides in the lysosome membrane. It catalyses the reaction Zn(2+)(in) + H(+)(out) = Zn(2+)(out) + H(+)(in). It carries out the reaction Fe(2+)(in) + H(+)(out) = Fe(2+)(out) + H(+)(in). The catalysed reaction is Mn(2+)(in) + H(+)(out) = Mn(2+)(out) + H(+)(in). In terms of biological role, macrophage-specific antiporter that fluxes metal ions in either direction against a proton gradient. Localized to late endosomal lysosomal membranes, delivers bivalent cations from the cytosol into these acidic compartments where they may directly affect antimicrobial activity. Involved in iron metabolism and host natural resistance to infection with intracellular parasites. Pathogen resistance involves sequestration of Fe(2+) and Mn(2+), cofactors of both prokaryotic and eukaryotic catalases and superoxide dismutases, not only to protect the macrophage against its own generation of reactive oxygen species, but to deny the cations to the pathogen for synthesis of its protective enzymes. The sequence is that of Natural resistance-associated macrophage protein 1 (SLC11A1) from Gallus gallus (Chicken).